The following is a 268-amino-acid chain: Interleukin-1 alpha (268 aa).

A propeptide spanning residues methionine 1–arginine 112 is cleaved from the precursor. Lysine 82 carries the post-translational modification N6-acetyllysine. Positions lysine 82 to leucine 86 are nuclear localization signal (NLS). At serine 87 the chain carries Phosphoserine. N-linked (GlcNAc...) asparagine glycosylation is found at asparagine 102 and asparagine 141.

It belongs to the IL-1 family. Monomer. Interacts with TMED10; the interaction mediates the translocation from the cytoplasm into the ERGIC (endoplasmic reticulum-Golgi intermediate compartment) and thereby secretion. Interacts with IL1R1. Interacts with S100A13; this interaction is the first step in the export of IL1A, followed by direct translocation of this complex across the plasma membrane. In terms of processing, acetylated within its nuclear localization sequence, which impacts subcellular localization. Proteolytic processed by CAPN1 in a calcium-dependent manner. Cleavage from 31 kDa precursor to 18 kDa biologically active molecules. Post-translationally, phosphorylated. Phosphorylation greatly enhances susceptibility to digestion and promotes the conversion of pre-IL1A alpha to the biologically active IL1A.

The protein localises to the nucleus. The protein resides in the cytoplasm. Its subcellular location is the secreted. Its function is as follows. Cytokine constitutively present intracellularly in nearly all resting non-hematopoietic cells that plays an important role in inflammation and bridges the innate and adaptive immune systems. After binding to its receptor IL1R1 together with its accessory protein IL1RAP, forms the high affinity interleukin-1 receptor complex. Signaling involves the recruitment of adapter molecules such as MYD88, IRAK1 or IRAK4. In turn, mediates the activation of NF-kappa-B and the three MAPK pathways p38, p42/p44 and JNK pathways. Within the cell, acts as an alarmin and cell death results in its liberation in the extracellular space after disruption of the cell membrane to induce inflammation and alert the host to injury or damage. In addition to its role as a danger signal, which occurs when the cytokine is passively released by cell necrosis, directly senses DNA damage and acts as signal for genotoxic stress without loss of cell integrity. This is Interleukin-1 alpha (IL1A) from Bubalus carabanensis (Swamp type water buffalo).